The sequence spans 259 residues: Ras-related protein Rab-34 (259 aa).

Methionine 1 carries the N-acetylmethionine modification. Positions 62, 63, 64, 65, 66, 78, 81, and 84 each coordinate GTP. Threonine 66 is a binding site for Mg(2+). Positions arginine 71–phenylalanine 89 match the Switch 1 motif. Mg(2+) is bound by residues threonine 84 and aspartate 107. The Switch 2 signature appears at threonine 108 to alanine 127. The GTP site is built by glycine 110, lysine 167, aspartate 169, and serine 198. Serine 241 and serine 244 each carry phosphoserine. S-geranylgeranyl cysteine attachment occurs at residues cysteine 257 and cysteine 258.

The protein belongs to the small GTPase superfamily. Rab family. In terms of assembly, interacts with RILP. The GTP-bound form interacts with REP15. Mg(2+) is required as a cofactor.

The protein resides in the cytoplasm. It localises to the golgi apparatus. It is found in the cytoplasmic vesicle. Its subcellular location is the phagosome. The protein localises to the phagosome membrane. The protein resides in the cell projection. It localises to the cilium. It is found in the cytoskeleton. Its subcellular location is the microtubule organizing center. The protein localises to the centrosome. The protein resides in the centriole. It carries out the reaction GTP + H2O = GDP + phosphate + H(+). With respect to regulation, regulated by guanine nucleotide exchange factors (GEFs) which promote the exchange of bound GDP for free GTP. Regulated by GTPase activating proteins (GAPs) which increase the GTP hydrolysis activity. Inhibited by GDP dissociation inhibitors (GDIs). Its function is as follows. The small GTPases Rab are key regulators of intracellular membrane trafficking, from the formation of transport vesicles to their fusion with membranes. Rabs cycle between an inactive GDP-bound form and an active GTP-bound form that is able to recruit to membranes different sets of downstream effectors directly responsible for vesicle formation, movement, tethering and fusion. RAB34 transports protein involved in the redistribution of lysosomes to the peri-Golgi region. Plays a role in the maturation of phagosomes that engulf pathogens, such as S.aureus and M.tuberculosis. Plays a role in the fusion of phagosomes with lysosomes. Required for the early steps of intracellular ciliogenesis, the cilium assembly pathway initiated by trafficking and docking of ciliary vesicles to the centrioles in the cytoplasm, followed by axoneme formation in the cytoplasm. After axoneme elongation, the centrioles migrate close to the cell surface so that ciliary vesicles can fuse with the plasma membrane to expose cilia to the extracellular space. It seems dispensable for ciliogenesis via the extracellular pathway where cilium assembly begins after migration and docking of the centriole to the plasma membrane. Also acts as a positive regulator of hedgehog signaling and regulates ciliary function. The polypeptide is Ras-related protein Rab-34 (RAB34) (Sus scrofa (Pig)).